We begin with the raw amino-acid sequence, 379 residues long: Na(+)/H(+) antiporter NhaA (379 aa).

12 helical membrane-spanning segments follow: residues 14–34 (AGGILLFIFATLAIILANTPL), 59–79 (LLMWVNDGLMAVFFMLVGMEV), 95–115 (VFPAIAATGGMVVPAIVFLVF), 125–145 (GWAIPMATDIAFALGVIALLG), 154–174 (IFLLALAIIDDLGAIVVIALF), 175–195 (FSHDLSPQAFIFAGIAVAILI), 200–220 (LKITALSAYGIVGIILWASVL), 221–241 (KSGVHATLAGVIIGFCIPLNG), 261–281 (FAILPLFAFCNAGVSLIGMGM), 292–312 (IALGLLLGKPLGIFSFCFVAV), 328–348 (IFAVSVLCGIGFTMSMFLAGL), and 359–379 (VTALARLGILIGSGFSAVLGY).

This sequence belongs to the NhaA Na(+)/H(+) (TC 2.A.33) antiporter family.

Its subcellular location is the cell inner membrane. The enzyme catalyses Na(+)(in) + 2 H(+)(out) = Na(+)(out) + 2 H(+)(in). Functionally, na(+)/H(+) antiporter that extrudes sodium in exchange for external protons. The sequence is that of Na(+)/H(+) antiporter NhaA from Pasteurella multocida (strain Pm70).